Reading from the N-terminus, the 253-residue chain is MGRKFFVGGNWKCNGTTDQVEKIVKTLNEGQVPPSDVVEVVVSPPYVFLPVVKSQLRQEFHVAAQNCWVKKGGAFTGEVSAEMLVNLGVPWVILGHSERRALLGESNEFVGDKVAYALSQGLKVIACVGETLEQREAGSTMDVVAAQTKAIAEKIKDWSNVVVAYEPVWAIGTGKVATPAQAQEVHASLRDWLKTNASPEVAESTRIIYGGSVTAANCKELAAQPDVDGFLVGGASLKPEFIDIINAATVKSA.

Residues N10 and K12 each contribute to the substrate site. Catalysis depends on H96, which acts as the Electrophile. E166 (proton acceptor) is an active-site residue.

The protein belongs to the triosephosphate isomerase family. As to quaternary structure, homodimer.

It is found in the cytoplasm. It catalyses the reaction D-glyceraldehyde 3-phosphate = dihydroxyacetone phosphate. Its pathway is carbohydrate biosynthesis; gluconeogenesis. It participates in carbohydrate degradation; glycolysis; D-glyceraldehyde 3-phosphate from glycerone phosphate: step 1/1. The sequence is that of Triosephosphate isomerase, cytosolic from Zea mays (Maize).